Consider the following 130-residue polypeptide: Small ribosomal subunit protein uS8 (130 aa).

This sequence belongs to the universal ribosomal protein uS8 family. Part of the 30S ribosomal subunit. Contacts proteins S5 and S12.

Its function is as follows. One of the primary rRNA binding proteins, it binds directly to 16S rRNA central domain where it helps coordinate assembly of the platform of the 30S subunit. In Pseudomonas fluorescens (strain Pf0-1), this protein is Small ribosomal subunit protein uS8.